Consider the following 229-residue polypeptide: MDRPAVVLLSGGLDSTTVLAIAKSQGFTPYALSFAYGQRHAVELDAARRVATALGAAGHVIATIDLTVFGGSALTADIAVPKHDTVEDLQADIPITYVPARNTIFLSYALAYAEVVGAGDIFIGVNALDYSGYPDCRPEYVDAFQAMGRLATRAGVQGTELTIHAPLMQMTKADIVRAGLALGVDYGMTSSCYDPDAAGHPCGHCDSCLLRLNGFAEAGSTDPLPYRGA.

9–19 provides a ligand contact to ATP; sequence LSGGLDSTTVL. Zn(2+)-binding residues include cysteine 192, cysteine 202, cysteine 205, and cysteine 208.

Belongs to the QueC family. Zn(2+) serves as cofactor.

The enzyme catalyses 7-carboxy-7-deazaguanine + NH4(+) + ATP = 7-cyano-7-deazaguanine + ADP + phosphate + H2O + H(+). It functions in the pathway purine metabolism; 7-cyano-7-deazaguanine biosynthesis. Catalyzes the ATP-dependent conversion of 7-carboxy-7-deazaguanine (CDG) to 7-cyano-7-deazaguanine (preQ(0)). In Kineococcus radiotolerans (strain ATCC BAA-149 / DSM 14245 / SRS30216), this protein is 7-cyano-7-deazaguanine synthase.